The following is a 239-amino-acid chain: Probable transcriptional regulatory protein BCQ_0605 (239 aa).

It belongs to the TACO1 family. YeeN subfamily.

It is found in the cytoplasm. This chain is Probable transcriptional regulatory protein BCQ_0605, found in Bacillus cereus (strain Q1).